The sequence spans 77 residues: Antitoxin VapB2 (77 aa).

The SpoVT-AbrB domain occupies Ala4 to Gln46.

The protein belongs to the VapB family. As to quaternary structure, probably forms a complex with cognate toxin VapC2.

Antitoxin component of a type II toxin-antitoxin (TA) system. Neutralizes the effect of cognate toxin VapC2 but not non-cognate toxin VapC2. The chain is Antitoxin VapB2 from Haemophilus influenzae (strain 86-028NP).